Here is a 227-residue protein sequence, read N- to C-terminus: Phosphoribosylformylglycinamidine synthase subunit PurQ (227 aa).

Residues 3–225 (FAVIVFPGSN…LKQWRETYVV (223 aa)) enclose the Glutamine amidotransferase type-1 domain. C86 (nucleophile) is an active-site residue. Residues H194 and E196 contribute to the active site.

As to quaternary structure, part of the FGAM synthase complex composed of 1 PurL, 1 PurQ and 2 PurS subunits.

It is found in the cytoplasm. It carries out the reaction N(2)-formyl-N(1)-(5-phospho-beta-D-ribosyl)glycinamide + L-glutamine + ATP + H2O = 2-formamido-N(1)-(5-O-phospho-beta-D-ribosyl)acetamidine + L-glutamate + ADP + phosphate + H(+). It catalyses the reaction L-glutamine + H2O = L-glutamate + NH4(+). Its pathway is purine metabolism; IMP biosynthesis via de novo pathway; 5-amino-1-(5-phospho-D-ribosyl)imidazole from N(2)-formyl-N(1)-(5-phospho-D-ribosyl)glycinamide: step 1/2. Its function is as follows. Part of the phosphoribosylformylglycinamidine synthase complex involved in the purines biosynthetic pathway. Catalyzes the ATP-dependent conversion of formylglycinamide ribonucleotide (FGAR) and glutamine to yield formylglycinamidine ribonucleotide (FGAM) and glutamate. The FGAM synthase complex is composed of three subunits. PurQ produces an ammonia molecule by converting glutamine to glutamate. PurL transfers the ammonia molecule to FGAR to form FGAM in an ATP-dependent manner. PurS interacts with PurQ and PurL and is thought to assist in the transfer of the ammonia molecule from PurQ to PurL. This is Phosphoribosylformylglycinamidine synthase subunit PurQ from Bacillus cereus (strain 03BB102).